Here is a 311-residue protein sequence, read N- to C-terminus: tRNA-cytidine(32) 2-sulfurtransferase (311 aa).

The PP-loop motif signature appears at 47 to 52 (SGGKDS). [4Fe-4S] cluster contacts are provided by Cys-122, Cys-125, and Cys-213.

This sequence belongs to the TtcA family. Homodimer. Requires Mg(2+) as cofactor. The cofactor is [4Fe-4S] cluster.

The protein localises to the cytoplasm. It catalyses the reaction cytidine(32) in tRNA + S-sulfanyl-L-cysteinyl-[cysteine desulfurase] + AH2 + ATP = 2-thiocytidine(32) in tRNA + L-cysteinyl-[cysteine desulfurase] + A + AMP + diphosphate + H(+). It functions in the pathway tRNA modification. Its function is as follows. Catalyzes the ATP-dependent 2-thiolation of cytidine in position 32 of tRNA, to form 2-thiocytidine (s(2)C32). The sulfur atoms are provided by the cysteine/cysteine desulfurase (IscS) system. This chain is tRNA-cytidine(32) 2-sulfurtransferase, found in Salmonella arizonae (strain ATCC BAA-731 / CDC346-86 / RSK2980).